Reading from the N-terminus, the 532-residue chain is Amidophosphoribosyltransferase 3, chloroplastic (532 aa).

The transit peptide at 1–59 (MAFSVEEISSILPNSLSANPRNVSQNTISPSFFKPSLKPYASKTLISLSCRRSLSPVFS) directs the protein to the chloroplast. Catalysis depends on cysteine 77, which acts as the Nucleophile. Positions 77–296 (CGVVGIHGDP…PGEIVVVDRN (220 aa)) constitute a Glutamine amidotransferase type-2 domain. Cysteine 313, cysteine 459, cysteine 511, and cysteine 514 together coordinate [4Fe-4S] cluster.

It in the C-terminal section; belongs to the purine/pyrimidine phosphoribosyltransferase family. [4Fe-4S] cluster serves as cofactor. Requires Mg(2+) as cofactor. Mostly expressed at low levels in leaves, and, to a lower extent, in cotyledons.

Its subcellular location is the plastid. It is found in the chloroplast stroma. The catalysed reaction is 5-phospho-beta-D-ribosylamine + L-glutamate + diphosphate = 5-phospho-alpha-D-ribose 1-diphosphate + L-glutamine + H2O. Its pathway is purine metabolism; IMP biosynthesis via de novo pathway; N(1)-(5-phospho-D-ribosyl)glycinamide from 5-phospho-alpha-D-ribose 1-diphosphate: step 1/2. Its activity is regulated as follows. Inhibited by the phenyltriazole acetic acid compound [5-(4-chlorophenyl)-1-isopropyl-1H-[1,2,4]triazol-3-yl]-acetic acid (DAS734), a bleaching herbicide. Repressed by AMP, ADP, ATP and GTP, and slightly by GMP. In terms of biological role, catalyzes the first committed step of 'de novo' purine biosynthesis from glutamine. In Arabidopsis thaliana (Mouse-ear cress), this protein is Amidophosphoribosyltransferase 3, chloroplastic (ASE3).